A 307-amino-acid polypeptide reads, in one-letter code: Ribosomal RNA small subunit methyltransferase H (307 aa).

S-adenosyl-L-methionine-binding positions include 32–34 (GGH), aspartate 52, phenylalanine 78, aspartate 99, and glutamine 106. A disordered region spans residues 287–307 (KEEIESNKRSHSAKLRVAEKV).

It belongs to the methyltransferase superfamily. RsmH family.

It is found in the cytoplasm. The enzyme catalyses cytidine(1402) in 16S rRNA + S-adenosyl-L-methionine = N(4)-methylcytidine(1402) in 16S rRNA + S-adenosyl-L-homocysteine + H(+). Specifically methylates the N4 position of cytidine in position 1402 (C1402) of 16S rRNA. The polypeptide is Ribosomal RNA small subunit methyltransferase H (Caldicellulosiruptor bescii (strain ATCC BAA-1888 / DSM 6725 / KCTC 15123 / Z-1320) (Anaerocellum thermophilum)).